The primary structure comprises 413 residues: Multifunctional CCA protein (413 aa).

ATP is bound by residues Gly8 and Arg11. 2 residues coordinate CTP: Gly8 and Arg11. The Mg(2+) site is built by Glu21 and Asp23. Residues Arg91, Arg137, and Arg140 each contribute to the ATP site. Residues Arg91, Arg137, and Arg140 each contribute to the CTP site. Residues 228–329 (TGEHTLLALA…LKLLEGLDLF (102 aa)) enclose the HD domain.

Belongs to the tRNA nucleotidyltransferase/poly(A) polymerase family. Bacterial CCA-adding enzyme type 1 subfamily. As to quaternary structure, monomer. Can also form homodimers and oligomers. Requires Mg(2+) as cofactor. Ni(2+) serves as cofactor.

It carries out the reaction a tRNA precursor + 2 CTP + ATP = a tRNA with a 3' CCA end + 3 diphosphate. It catalyses the reaction a tRNA with a 3' CCA end + 2 CTP + ATP = a tRNA with a 3' CCACCA end + 3 diphosphate. Catalyzes the addition and repair of the essential 3'-terminal CCA sequence in tRNAs without using a nucleic acid template. Adds these three nucleotides in the order of C, C, and A to the tRNA nucleotide-73, using CTP and ATP as substrates and producing inorganic pyrophosphate. tRNA 3'-terminal CCA addition is required both for tRNA processing and repair. Also involved in tRNA surveillance by mediating tandem CCA addition to generate a CCACCA at the 3' terminus of unstable tRNAs. While stable tRNAs receive only 3'-terminal CCA, unstable tRNAs are marked with CCACCA and rapidly degraded. The sequence is that of Multifunctional CCA protein from Alkalilimnicola ehrlichii (strain ATCC BAA-1101 / DSM 17681 / MLHE-1).